A 189-amino-acid chain; its full sequence is Ribosome maturation factor RimM (189 aa).

One can recognise a PRC barrel domain in the interval 118–189 (SGEYYWDDLI…IILVDWDENF (72 aa)).

This sequence belongs to the RimM family. Binds ribosomal protein uS19.

It localises to the cytoplasm. In terms of biological role, an accessory protein needed during the final step in the assembly of 30S ribosomal subunit, possibly for assembly of the head region. Essential for efficient processing of 16S rRNA. May be needed both before and after RbfA during the maturation of 16S rRNA. It has affinity for free ribosomal 30S subunits but not for 70S ribosomes. The protein is Ribosome maturation factor RimM of Ruthia magnifica subsp. Calyptogena magnifica.